We begin with the raw amino-acid sequence, 367 residues long: MFDPASFVEEIGPQLRQKLGNEKVLAAVSGGVDSTTAAVLAYNLLGDKVIPVLVDTGFLRKNEAEKIKDYLSNILPNLIIVDKKETFISEIEGIDDAEMKRKRFRELFYSTISSLMKKFNARYLMQGTIAADWVETQGGIKTQHNVLVQIGIDTEKEWGFTLIEPLADLYKNEVRELARYLKLPKEISERQPFPGPGLLVRAVGKLTREKLEVVREANDIVEKYLDPFNYSQYFAVSFESYGNLVNLDGIDAFLYKARATGVKGDVRAYGNIAKIECSNINNVKNIIDTLVKYDITHVLCTLDERNSGKYSVAIRAVTTEDFMTADYVRIPKEILSKISSEILQKIPNVKEVLYDVTSKPPATIEFE.

Positions 2-190 (FDPASFVEEI…LKLPKEISER (189 aa)) constitute a GMPS ATP-PPase domain. 29 to 35 (SGGVDST) contacts ATP.

In terms of assembly, heterodimer composed of a glutamine amidotransferase subunit (A) and a GMP-binding subunit (B).

It carries out the reaction XMP + L-glutamine + ATP + H2O = GMP + L-glutamate + AMP + diphosphate + 2 H(+). It participates in purine metabolism; GMP biosynthesis; GMP from XMP (L-Gln route): step 1/1. Its function is as follows. Catalyzes the synthesis of GMP from XMP. The protein is GMP synthase [glutamine-hydrolyzing] subunit B (guaAB) of Saccharolobus solfataricus (strain ATCC 35092 / DSM 1617 / JCM 11322 / P2) (Sulfolobus solfataricus).